The primary structure comprises 89 residues: MEYQYPLDYNWSNEEMVAVVKFYEAIEKVYEKGVLREDLMELYRRFKEIVPSKAAEKKIDKEFQEVSGYSIYRTIQRAKEVAEKKIVKM.

This sequence belongs to the UPF0223 family.

The chain is UPF0223 protein BcerKBAB4_3787 from Bacillus mycoides (strain KBAB4) (Bacillus weihenstephanensis).